The following is a 166-amino-acid chain: SsrA-binding protein (166 aa).

Positions 143–166 (HDKREDDKRKQANRDMKSALARYR) are disordered. The segment covering 144-159 (DKREDDKRKQANRDMK) has biased composition (basic and acidic residues).

This sequence belongs to the SmpB family.

The protein localises to the cytoplasm. Functionally, required for rescue of stalled ribosomes mediated by trans-translation. Binds to transfer-messenger RNA (tmRNA), required for stable association of tmRNA with ribosomes. tmRNA and SmpB together mimic tRNA shape, replacing the anticodon stem-loop with SmpB. tmRNA is encoded by the ssrA gene; the 2 termini fold to resemble tRNA(Ala) and it encodes a 'tag peptide', a short internal open reading frame. During trans-translation Ala-aminoacylated tmRNA acts like a tRNA, entering the A-site of stalled ribosomes, displacing the stalled mRNA. The ribosome then switches to translate the ORF on the tmRNA; the nascent peptide is terminated with the 'tag peptide' encoded by the tmRNA and targeted for degradation. The ribosome is freed to recommence translation, which seems to be the essential function of trans-translation. This chain is SsrA-binding protein, found in Prochlorococcus marinus (strain MIT 9211).